Reading from the N-terminus, the 388-residue chain is MQFPAPLKSNSIKFLLLGSGELGKEVAIEAQRLGIEVVAVDRYPNAPAHLVAHRSYVIDMKSKEQVLEVIFREKPDYILPEIEAINIEALFEAEERGFRVIPNAEAVNKTMNRKNIRKFAAEELGLKTSQYRFVSSFEGLQEAARTLGFPCVIKPVMSSSGHGQSIARNEADLERSWEIAKEARGDASELIVEEFIDFDYEITLLTARNETGTVFCPPIGHIQKDGDYIFSWQPMQMSETALQKAKEIAKTITDGLGGRGIFGVELFVKGDEVYFSEVSPRPHDTGMVTMITQSQSEFALHVRAVLGLGLGFTFYTPGASAAYKAKHESFTPVIEADESVFDQESFLRVFGKPESHEGRRMAVVLTLAETAEQALQKANELIAKVSDQ.

N(1)-(5-phospho-beta-D-ribosyl)glycinamide contacts are provided by residues 21 to 22 (EL) and E81. Residues R113, K154, 159 to 164 (SSGHGQ), 193 to 196 (EEFI), and E201 contribute to the ATP site. The region spanning 118-306 (KFAAEELGLK…EFALHVRAVL (189 aa)) is the ATP-grasp domain. Positions 265 and 277 each coordinate Mg(2+). N(1)-(5-phospho-beta-D-ribosyl)glycinamide contacts are provided by residues D284, K352, and 359 to 360 (RR).

This sequence belongs to the PurK/PurT family. Homodimer.

It carries out the reaction N(1)-(5-phospho-beta-D-ribosyl)glycinamide + formate + ATP = N(2)-formyl-N(1)-(5-phospho-beta-D-ribosyl)glycinamide + ADP + phosphate + H(+). The protein operates within purine metabolism; IMP biosynthesis via de novo pathway; N(2)-formyl-N(1)-(5-phospho-D-ribosyl)glycinamide from N(1)-(5-phospho-D-ribosyl)glycinamide (formate route): step 1/1. Functionally, involved in the de novo purine biosynthesis. Catalyzes the transfer of formate to 5-phospho-ribosyl-glycinamide (GAR), producing 5-phospho-ribosyl-N-formylglycinamide (FGAR). Formate is provided by PurU via hydrolysis of 10-formyl-tetrahydrofolate. This is Formate-dependent phosphoribosylglycinamide formyltransferase from Nitratiruptor sp. (strain SB155-2).